The primary structure comprises 74 residues: Putative membrane protein insertion efficiency factor (74 aa).

The protein belongs to the UPF0161 family.

The protein resides in the cell inner membrane. Its function is as follows. Could be involved in insertion of integral membrane proteins into the membrane. The sequence is that of Putative membrane protein insertion efficiency factor from Endomicrobium trichonymphae.